A 229-amino-acid polypeptide reads, in one-letter code: Large ribosomal subunit protein uL1 (229 aa).

The protein belongs to the universal ribosomal protein uL1 family. Part of the 50S ribosomal subunit.

In terms of biological role, binds directly to 23S rRNA. The L1 stalk is quite mobile in the ribosome, and is involved in E site tRNA release. Protein L1 is also a translational repressor protein, it controls the translation of the L11 operon by binding to its mRNA. This chain is Large ribosomal subunit protein uL1, found in Bifidobacterium animalis subsp. lactis (strain AD011).